The chain runs to 556 residues: MNKMEQMKQQLREEIVVAVKAAGLATDETIPEVILETPKEKAHGDFATNMAMQLARVAKKAPRLIAEELTAKLDRKRAAIEKIEIAGPGFINFFLDNSYLREMIPTVLRAESAYGETNVGKGKKVQVEFVSANPTGNLHLGHARGAAVGDALCNILAKAGYDVSREYYINDAGNQINNLALSLEARYFQALGMEKDMPEDGYHGEDIIQFGKDLAETHGDKFVHESSEERLAFFREYGLKRELEKIKSDLEEFRVPFDNWYSETSLYTTGKVEKTLNVLKEKGKTYEQDGALWFRSTEYGDDKDRVLVKNDGSYTYLTPDISYHEDKFLRGFEKLINIWGADHHGYIPRMKAAIQALGYEKDQLDVQIIQMVSLFQNGEKVKMSKRTGKAVTLRDLMEEVGIDATRYFFAMRSADSHLDFDMDLAVSKSNENPVYYVQYAHARVCSMLRKGKELGLSFDESTDLSPIASEKEYDLLKKIGEFPEVVAEAAQKQMPHRITNYVHELASTLHSFYNAEQVINPENDEQSKARLALMKATQVTLKNALSLVGVEAPERM.

A 'HIGH' region motif is present at residues 132 to 142; it reads ANPTGNLHLGH.

Belongs to the class-I aminoacyl-tRNA synthetase family. Monomer.

The protein localises to the cytoplasm. The catalysed reaction is tRNA(Arg) + L-arginine + ATP = L-arginyl-tRNA(Arg) + AMP + diphosphate. The sequence is that of Arginine--tRNA ligase 1 (argS1) from Halalkalibacterium halodurans (strain ATCC BAA-125 / DSM 18197 / FERM 7344 / JCM 9153 / C-125) (Bacillus halodurans).